The following is a 301-amino-acid chain: Putative S-adenosyl-L-methionine-dependent methyltransferase MAP_3777 (301 aa).

Residues Asp126 and 155–156 each bind S-adenosyl-L-methionine; that span reads DL.

The protein belongs to the UPF0677 family.

Exhibits S-adenosyl-L-methionine-dependent methyltransferase activity. This is Putative S-adenosyl-L-methionine-dependent methyltransferase MAP_3777 from Mycolicibacterium paratuberculosis (strain ATCC BAA-968 / K-10) (Mycobacterium paratuberculosis).